A 407-amino-acid chain; its full sequence is Peptidase T (407 aa).

H81 serves as a coordination point for Zn(2+). The active site involves D83. D142 lines the Zn(2+) pocket. E176 acts as the Proton acceptor in catalysis. Residues E177, D199, and H381 each coordinate Zn(2+).

This sequence belongs to the peptidase M20B family. Zn(2+) serves as cofactor.

It is found in the cytoplasm. It carries out the reaction Release of the N-terminal residue from a tripeptide.. In terms of biological role, cleaves the N-terminal amino acid of tripeptides. The chain is Peptidase T from Streptococcus pneumoniae (strain Hungary19A-6).